We begin with the raw amino-acid sequence, 379 residues long: Citrate synthase (379 aa).

Catalysis depends on residues histidine 225, histidine 265, and aspartate 316.

This sequence belongs to the citrate synthase family. In terms of assembly, homodimer.

It catalyses the reaction oxaloacetate + acetyl-CoA + H2O = citrate + CoA + H(+). Its pathway is carbohydrate metabolism; tricarboxylic acid cycle; isocitrate from oxaloacetate: step 1/2. Its function is as follows. Might regulate the synthesis and function of enzymes involved in later enzymatic steps of Krebs cycle. In Haloferax volcanii (strain ATCC 29605 / DSM 3757 / JCM 8879 / NBRC 14742 / NCIMB 2012 / VKM B-1768 / DS2) (Halobacterium volcanii), this protein is Citrate synthase (citZ).